Here is a 363-residue protein sequence, read N- to C-terminus: MSMTAGNVVFVGNIPYDVSEQQMTEIFNQVGPVKTFKLVLDPETGSGKGYGFCEFFDSETTAMAVRKLNNSELGPRKIRVEFPSNDPRRNQSYEYTERTDRYMEQQNAHESSYNSRFIPPVLHSTSSLPASQGGGMPSPAIYSSSMATNLNKNINSTSVPAYNFHNSMTSDFDSASQPHTDAYNARTFQYNKSSQNKGDYTSGTSISNPTSIPLAPSVVQVLSTFSAQELLNMLSKLQTVVHIAPEEARRLLIANPALPYAAFQAMLLMNLVDANVLQQVVVAVKNKNMHQPASATSSPPSVPQKIPSSNHKSQQANGSDQGNEGKRMALIQQLLALTPEQINALPPAQRDQILSIRRQHFRQ.

In terms of domain architecture, RRM spans 7-85; it reads NVVFVGNIPY…RKIRVEFPSN (79 aa). Residues 291–325 form a disordered region; the sequence is QPASATSSPPSVPQKIPSSNHKSQQANGSDQGNEG. Residues 306–322 are compositionally biased toward polar residues; the sequence is IPSSNHKSQQANGSDQG.

In terms of assembly, interacts with res2.

It localises to the nucleus. Component of the cleavage factor I (CF I) involved in pre-mRNA 3'-end processing. The chain is Cleavage and termination factor 1 (ctf1) from Schizosaccharomyces pombe (strain 972 / ATCC 24843) (Fission yeast).